The sequence spans 488 residues: Alkaline nuclease (488 aa).

It belongs to the herpesviridae alkaline nuclease family. Interacts with major DNA-binding protein; this interaction increases the nuclease processivity of the alkaline exonuclease.

The protein resides in the host nucleus. It is found in the host cytoplasm. Its function is as follows. Plays a role in processing non linear or branched viral DNA intermediates in order to promote the production of mature packaged unit-length linear progeny viral DNA molecules. Exhibits endonuclease and exonuclease activities and accepts both double-stranded and single-stranded DNA as substrate. Exonuclease digestion of DNA is in the 5'-&gt; 3' direction and the products are 5'-monophosphate nucleosides. Additionally, forms a recombinase with the major DNA-binding protein, which displays strand exchange activity. In Homo sapiens (Human), this protein is Alkaline nuclease (U70).